The following is a 399-amino-acid chain: Glutathione S-transferase LANCL1 (399 aa).

The residue at position 2 (Ala2) is an N-acetylalanine. Lys142 carries the post-translational modification N6-acetyllysine. Cys276 provides a ligand contact to Zn(2+). A glutathione-binding site is contributed by Lys317. Residues Cys322 and His323 each coordinate Zn(2+). 364 to 367 (RTAD) lines the glutathione pocket.

It belongs to the LanC-like protein family. Interacts with the C-terminal of STOM. Interacts with the EPS8 SH3 domain. Interaction with EPS8 is inhibited by glutathione binding. As to expression, detected in spinal cord (at protein level). Ubiquitous. Strongly expressed in brain, testis, alveolar macrophages and epithelial cells of the lung, kidney and intestine. Expression in brain increases during the first postnatal month and remaining high in adult.

It is found in the cytoplasm. The protein localises to the cell membrane. It carries out the reaction RX + glutathione = an S-substituted glutathione + a halide anion + H(+). The enzyme catalyses 1-chloro-2,4-dinitrobenzene + glutathione = 2,4-dinitrophenyl-S-glutathione + chloride + H(+). In terms of biological role, functions as a glutathione transferase. Catalyzes conjugation of the glutathione (GSH) to artificial substrates 1-chloro-2,4-dinitrobenzene (CDNB) and p-nitrophenyl acetate. Mitigates neuronal oxidative stress during normal postnatal development and in response to oxidative stresses probably through GSH antioxidant defense mechanism. May play a role in EPS8 signaling. Binds glutathione. The protein is Glutathione S-transferase LANCL1 of Mus musculus (Mouse).